The primary structure comprises 110 residues: Waprin-Thr1 (110 aa).

The N-terminal stretch at 1–20 is a signal peptide; it reads MYKKGTILVLAYLLIATAVC. Residues 22–68 enclose the WAP domain; sequence LSYKEGHCPLRNSVSKCIPRCVSDYQCSFNEKCCPNKCGSESCVQAS. 4 disulfides stabilise this stretch: cysteine 29-cysteine 55, cysteine 38-cysteine 59, cysteine 42-cysteine 54, and cysteine 48-cysteine 64.

Belongs to the venom waprin family. Cys-rich waprin subfamily. As to expression, expressed by the venom gland.

It localises to the secreted. Its function is as follows. Antimicrobial peptides with activity against Gram-positive and Gram-negative bacteria as well as fungi. Recognizes carbohydrates in the microbial cell walls, and induces structural damage to them. Also inhibits microbial serine proteases subtilisin A and proteinase K, as well as human and porcine elastases. Carbohydrates that are recognized are LPS, mannan, peptidoglycan, and N-acetl-D-glucosamine. In Apis mellifera (Honeybee), this protein is Waprin-Thr1.